We begin with the raw amino-acid sequence, 256 residues long: Ubiquinone/menaquinone biosynthesis C-methyltransferase UbiE (256 aa).

Positions 1-12 are enriched in basic and acidic residues; the sequence is MNDQRKGDHAEP. The disordered stretch occupies residues 1 to 23; that stretch reads MNDQRKGDHAEPTTHFGYQDVPE. S-adenosyl-L-methionine-binding positions include Thr-79, Asp-100, and 128–129; that span reads DA.

It belongs to the class I-like SAM-binding methyltransferase superfamily. MenG/UbiE family.

It catalyses the reaction a 2-demethylmenaquinol + S-adenosyl-L-methionine = a menaquinol + S-adenosyl-L-homocysteine + H(+). It carries out the reaction a 2-methoxy-6-(all-trans-polyprenyl)benzene-1,4-diol + S-adenosyl-L-methionine = a 5-methoxy-2-methyl-3-(all-trans-polyprenyl)benzene-1,4-diol + S-adenosyl-L-homocysteine + H(+). It functions in the pathway quinol/quinone metabolism; menaquinone biosynthesis; menaquinol from 1,4-dihydroxy-2-naphthoate: step 2/2. The protein operates within cofactor biosynthesis; ubiquinone biosynthesis. Methyltransferase required for the conversion of demethylmenaquinol (DMKH2) to menaquinol (MKH2) and the conversion of 2-polyprenyl-6-methoxy-1,4-benzoquinol (DDMQH2) to 2-polyprenyl-3-methyl-6-methoxy-1,4-benzoquinol (DMQH2). This chain is Ubiquinone/menaquinone biosynthesis C-methyltransferase UbiE, found in Pseudomonas putida (strain ATCC 700007 / DSM 6899 / JCM 31910 / BCRC 17059 / LMG 24140 / F1).